The primary structure comprises 240 residues: Uridylate kinase (240 aa).

Residue 15 to 18 (KLSG) coordinates ATP. The interval 23–28 (GSEGFG) is involved in allosteric activation by GTP. Residue G57 participates in UMP binding. Positions 58 and 62 each coordinate ATP. UMP contacts are provided by residues D77 and 138–145 (TGNPFFTT). ATP contacts are provided by T165, Y171, and D174.

It belongs to the UMP kinase family. Homohexamer.

The protein localises to the cytoplasm. It carries out the reaction UMP + ATP = UDP + ADP. The protein operates within pyrimidine metabolism; CTP biosynthesis via de novo pathway; UDP from UMP (UMPK route): step 1/1. Allosterically activated by GTP. Inhibited by UTP. Functionally, catalyzes the reversible phosphorylation of UMP to UDP. The sequence is that of Uridylate kinase from Photobacterium profundum (strain SS9).